The following is a 337-amino-acid chain: Glyceraldehyde-3-phosphate dehydrogenase (337 aa).

NAD(+) is bound by residues 12-13 (RI), Asp34, and Arg79. Residues 150–152 (SCT), Thr181, 210–211 (TG), and Arg233 each bind D-glyceraldehyde 3-phosphate. The active-site Nucleophile is the Cys151. Asn315 serves as a coordination point for NAD(+).

The protein belongs to the glyceraldehyde-3-phosphate dehydrogenase family. Homotetramer.

It localises to the cytoplasm. The enzyme catalyses D-glyceraldehyde 3-phosphate + phosphate + NAD(+) = (2R)-3-phospho-glyceroyl phosphate + NADH + H(+). It participates in carbohydrate degradation; glycolysis; pyruvate from D-glyceraldehyde 3-phosphate: step 1/5. The sequence is that of Glyceraldehyde-3-phosphate dehydrogenase (GPD-1) from Claviceps purpurea (strain 20.1) (Ergot fungus).